Consider the following 424-residue polypeptide: Double homeobox protein 4-like protein 2 (424 aa).

Positions 1 to 10 (MALPTPSDST) are enriched in polar residues. 5 disordered regions span residues 1 to 24 (MALP…RRRL), 72 to 102 (SRQL…TAVT), 148 to 167 (RHPG…CSAA), 218 to 362 (LQPS…LQEP), and 388 to 414 (QPLL…PLSE). DNA-binding regions (homeobox) lie at residues 19–78 (GRRR…LRQH) and 94–153 (GRRK…PGQG). Residues 265–274 (KSREDRDPQR) are compositionally biased toward basic and acidic residues. 2 stretches are compositionally biased toward low complexity: residues 278–302 (PGPC…LAPP) and 319–329 (AGAAWEPQAGA).

The protein localises to the nucleus. Functionally, may be involved in transcriptional regulation. This chain is Double homeobox protein 4-like protein 2 (DUX4L2), found in Homo sapiens (Human).